The primary structure comprises 700 residues: Chaperonin CPN60, mitochondrial (700 aa).

A mitochondrion-targeting transit peptide spans 1–9; that stretch reads MRMKRIHIL. Residues 636–700 are disordered; the sequence is TYKHKLHDDE…SMNDEYNYDE (65 aa). The span at 644-700 shows a compositional bias: acidic residues; it reads DEDTDEDDEEDEDDEDDEDDLDDDDYDDEDEEDEEDEEDEDDEDDEDSMNDEYNYDE.

This sequence belongs to the chaperonin (HSP60) family.

The protein localises to the mitochondrion matrix. In terms of biological role, implicated in mitochondrial protein import and macromolecular assembly. May facilitate the correct folding of imported proteins. May also prevent misfolding and promote the refolding and proper assembly of unfolded polypeptides generated under stress conditions in the mitochondrial matrix. This is Chaperonin CPN60, mitochondrial from Plasmodium falciparum (isolate FCR-3 / Gambia).